Here is a 159-residue protein sequence, read N- to C-terminus: Phosphopantetheine adenylyltransferase (159 aa).

A substrate-binding site is contributed by Thr-10. Residues 10-11 (TF) and His-18 each bind ATP. 3 residues coordinate substrate: Lys-42, Met-74, and Arg-88. ATP-binding positions include 89–91 (GLR), Glu-99, and 124–130 (WSFISSS).

It belongs to the bacterial CoaD family. In terms of assembly, homohexamer. It depends on Mg(2+) as a cofactor.

The protein localises to the cytoplasm. The catalysed reaction is (R)-4'-phosphopantetheine + ATP + H(+) = 3'-dephospho-CoA + diphosphate. It participates in cofactor biosynthesis; coenzyme A biosynthesis; CoA from (R)-pantothenate: step 4/5. Reversibly transfers an adenylyl group from ATP to 4'-phosphopantetheine, yielding dephospho-CoA (dPCoA) and pyrophosphate. The sequence is that of Phosphopantetheine adenylyltransferase from Pectobacterium carotovorum subsp. carotovorum (strain PC1).